The following is a 376-amino-acid chain: Queuine tRNA-ribosyltransferase (376 aa).

Catalysis depends on aspartate 90, which acts as the Proton acceptor. Residues 90 to 94, aspartate 144, glutamine 193, and glycine 220 contribute to the substrate site; that span reads DSGGF. Residues 251 to 257 form an RNA binding region; the sequence is GVGTPED. The active-site Nucleophile is the aspartate 270. The RNA binding; important for wobble base 34 recognition stretch occupies residues 275–279; the sequence is TRNAR. Zn(2+)-binding residues include cysteine 308, cysteine 310, cysteine 313, and histidine 339.

The protein belongs to the queuine tRNA-ribosyltransferase family. In terms of assembly, homodimer. Within each dimer, one monomer is responsible for RNA recognition and catalysis, while the other monomer binds to the replacement base PreQ1. Zn(2+) is required as a cofactor.

The catalysed reaction is 7-aminomethyl-7-carbaguanine + guanosine(34) in tRNA = 7-aminomethyl-7-carbaguanosine(34) in tRNA + guanine. The protein operates within tRNA modification; tRNA-queuosine biosynthesis. Functionally, catalyzes the base-exchange of a guanine (G) residue with the queuine precursor 7-aminomethyl-7-deazaguanine (PreQ1) at position 34 (anticodon wobble position) in tRNAs with GU(N) anticodons (tRNA-Asp, -Asn, -His and -Tyr). Catalysis occurs through a double-displacement mechanism. The nucleophile active site attacks the C1' of nucleotide 34 to detach the guanine base from the RNA, forming a covalent enzyme-RNA intermediate. The proton acceptor active site deprotonates the incoming PreQ1, allowing a nucleophilic attack on the C1' of the ribose to form the product. After dissociation, two additional enzymatic reactions on the tRNA convert PreQ1 to queuine (Q), resulting in the hypermodified nucleoside queuosine (7-(((4,5-cis-dihydroxy-2-cyclopenten-1-yl)amino)methyl)-7-deazaguanosine). In Cupriavidus pinatubonensis (strain JMP 134 / LMG 1197) (Cupriavidus necator (strain JMP 134)), this protein is Queuine tRNA-ribosyltransferase.